The chain runs to 369 residues: Chorismate synthase (369 aa).

The NADP(+) site is built by Arg-48 and Arg-54. Residues 125-127 (RSS), 238-239 (NA), Gly-278, 293-297 (KPTSS), and Arg-319 each bind FMN.

This sequence belongs to the chorismate synthase family. As to quaternary structure, homotetramer. The cofactor is FMNH2.

It catalyses the reaction 5-O-(1-carboxyvinyl)-3-phosphoshikimate = chorismate + phosphate. It participates in metabolic intermediate biosynthesis; chorismate biosynthesis; chorismate from D-erythrose 4-phosphate and phosphoenolpyruvate: step 7/7. In terms of biological role, catalyzes the anti-1,4-elimination of the C-3 phosphate and the C-6 proR hydrogen from 5-enolpyruvylshikimate-3-phosphate (EPSP) to yield chorismate, which is the branch point compound that serves as the starting substrate for the three terminal pathways of aromatic amino acid biosynthesis. This reaction introduces a second double bond into the aromatic ring system. The chain is Chorismate synthase from Burkholderia mallei (strain NCTC 10229).